An 85-amino-acid chain; its full sequence is Small ribosomal subunit protein uS17 (85 aa).

The protein belongs to the universal ribosomal protein uS17 family. In terms of assembly, part of the 30S ribosomal subunit.

One of the primary rRNA binding proteins, it binds specifically to the 5'-end of 16S ribosomal RNA. This is Small ribosomal subunit protein uS17 from Ruminiclostridium cellulolyticum (strain ATCC 35319 / DSM 5812 / JCM 6584 / H10) (Clostridium cellulolyticum).